Reading from the N-terminus, the 194-residue chain is uncharacterized protein (194 aa).

A signal peptide spans 1-29 (MKKAFLVFLSVVLVTTVFLVKQQESVAQA). Residues 104–131 (KVDELLKKAGQIVEEKVEAAKEIAASKD) are a coiled coil. Residues 149–171 (YFYYVSYVAAAGALILIILAIDI) form a helical membrane-spanning segment.

It is found in the membrane. This is an uncharacterized protein from Bacillus subtilis (strain 168).